Here is a 464-residue protein sequence, read N- to C-terminus: 3-isopropylmalate dehydratase large subunit (464 aa).

The [4Fe-4S] cluster site is built by Cys-337, Cys-397, and Cys-400.

It belongs to the aconitase/IPM isomerase family. LeuC type 1 subfamily. Heterodimer of LeuC and LeuD. [4Fe-4S] cluster serves as cofactor.

The enzyme catalyses (2R,3S)-3-isopropylmalate = (2S)-2-isopropylmalate. It functions in the pathway amino-acid biosynthesis; L-leucine biosynthesis; L-leucine from 3-methyl-2-oxobutanoate: step 2/4. Its function is as follows. Catalyzes the isomerization between 2-isopropylmalate and 3-isopropylmalate, via the formation of 2-isopropylmaleate. The protein is 3-isopropylmalate dehydratase large subunit of Bacillus cereus (strain ATCC 14579 / DSM 31 / CCUG 7414 / JCM 2152 / NBRC 15305 / NCIMB 9373 / NCTC 2599 / NRRL B-3711).